The chain runs to 234 residues: MYATNLLYLLALWNLWLVSGGQQDIPNGNATLPSPQKPQNTIDQIGANQNYWFTYNALRQNETLAIIDAMESGIASSVLAFQAQMEIQLQPLKIIMLHHAGNIKASNNIKMSRFEKVGSRYFHIEKNLTLTWFEAYVTCREMNGHLANIRDEKELDGILALAPNNSYWVDISKLVEYGGTFVSTLTGREPIFVKWKPNQDKKKQHNCVYIYAKEMYYDECFEKKSFVCQANQWA.

Positions 1-21 (MYATNLLYLLALWNLWLVSGG) are cleaved as a signal peptide. Residues asparagine 29, asparagine 61, asparagine 127, and asparagine 164 are each glycosylated (N-linked (GlcNAc...) asparagine). Residues 137-234 (VTCREMNGHL…SFVCQANQWA (98 aa)) form the C-type lectin domain. Intrachain disulfides connect cysteine 139–cysteine 228 and cysteine 207–cysteine 220.

The protein localises to the secreted. Responsible for physiological and behavioral changes in mated female flies. The protein is Accessory gland protein Acp29AB (Acp29AB) of Drosophila simulans (Fruit fly).